We begin with the raw amino-acid sequence, 94 residues long: CRISPR-associated endoribonuclease Cas2 1 (94 aa).

Asp8 is a binding site for Mg(2+).

The protein belongs to the CRISPR-associated endoribonuclease Cas2 protein family. Homodimer, forms a heterotetramer with a Cas1 homodimer. Mg(2+) serves as cofactor.

Its function is as follows. CRISPR (clustered regularly interspaced short palindromic repeat), is an adaptive immune system that provides protection against mobile genetic elements (viruses, transposable elements and conjugative plasmids). CRISPR clusters contain sequences complementary to antecedent mobile elements and target invading nucleic acids. CRISPR clusters are transcribed and processed into CRISPR RNA (crRNA). Involved in the integration of spacer DNA into the CRISPR cassette. Functions as a ssRNA-specific endoribonuclease. This Archaeoglobus fulgidus (strain ATCC 49558 / DSM 4304 / JCM 9628 / NBRC 100126 / VC-16) protein is CRISPR-associated endoribonuclease Cas2 1 (cas21).